We begin with the raw amino-acid sequence, 153 residues long: Putative adenylate kinase (153 aa).

5 residues coordinate ATP: glycine 12, glycine 14, lysine 15, serine 16, and threonine 17. The tract at residues 31 to 47 (EGNELAKEYGCLFDEEV) is NMP. Residues 94 to 104 (ARGYSEEKIQE) are LID. Arginine 95 contributes to the ATP binding site.

This sequence belongs to the adenylate kinase family. AK6 subfamily. As to quaternary structure, interacts with uS11. Not a structural component of 40S pre-ribosomes, but transiently interacts with them by binding to uS11.

The enzyme catalyses AMP + ATP = 2 ADP. It carries out the reaction ATP + H2O = ADP + phosphate + H(+). Its function is as follows. Broad-specificity nucleoside monophosphate (NMP) kinase that catalyzes the reversible transfer of the terminal phosphate group between nucleoside triphosphates and monophosphates. Also has ATPase activity. Involved in the late maturation steps of the 30S ribosomal particles, specifically 16S rRNA maturation. While NMP activity is not required for ribosome maturation, ATPase activity is. Associates transiently with small ribosomal subunit protein uS11. ATP hydrolysis breaks the interaction with uS11. May temporarily remove uS11 from the ribosome to enable a conformational change of the ribosomal RNA that is needed for the final maturation step of the small ribosomal subunit. The protein is Putative adenylate kinase of Thermoplasma volcanium (strain ATCC 51530 / DSM 4299 / JCM 9571 / NBRC 15438 / GSS1).